A 456-amino-acid chain; its full sequence is Chitobiosyldiphosphodolichol beta-mannosyltransferase (456 aa).

The Lumenal segment spans residues 1–22 (MGEIIKYKGFDHVWQYSGPWLY). Residues 23–43 (CLIGIYISLPVLAYHILPWIF) traverse the membrane as a helical segment. At 44-103 (HKNRSNKRKTISIFVLGDLGHSPRMCYHASSFSKLDYYVNLCGYVETEPSHQIVDDVNID) the chain is on the cytoplasmic side. An intramembrane region (helical) is located at residues 104-124 (IIPIEAIKNTNNLPYIMFAIL). Over 125-456 (KVVRQCGKIW…TFSSIFENKS (332 aa)) the chain is Cytoplasmic.

This sequence belongs to the glycosyltransferase group 1 family.

Its subcellular location is the endoplasmic reticulum membrane. The enzyme catalyses an N,N'-diacetylchitobiosyl-diphospho-di-trans,poly-cis-dolichol + GDP-alpha-D-mannose = a beta-D-Man-(1-&gt;4)-beta-D-GlcNAc-(1-&gt;4)-alpha-D-GlcNAc-diphospho-di-trans,poly-cis-dolichol + GDP + H(+). The protein operates within protein modification; protein glycosylation. Participates in the formation of the lipid-linked precursor oligosaccharide for N-glycosylation. Involved in assembling the dolichol-pyrophosphate-GlcNAc(2)-Man(5) intermediate on the cytoplasmic surface of the ER. The protein is Chitobiosyldiphosphodolichol beta-mannosyltransferase (ALG1) of Candida albicans (strain SC5314 / ATCC MYA-2876) (Yeast).